The chain runs to 196 residues: ATP synthase subunit b (196 aa).

The helical transmembrane segment at 24 to 44 threads the bilayer; that stretch reads PLSELLIGTLSFALLVAFFFW.

It belongs to the ATPase B chain family. As to quaternary structure, F-type ATPases have 2 components, F(1) - the catalytic core - and F(0) - the membrane proton channel. F(1) has five subunits: alpha(3), beta(3), gamma(1), delta(1), epsilon(1). F(0) has three main subunits: a(1), b(2) and c(10-14). The alpha and beta chains form an alternating ring which encloses part of the gamma chain. F(1) is attached to F(0) by a central stalk formed by the gamma and epsilon chains, while a peripheral stalk is formed by the delta and b chains.

It localises to the cell membrane. Its function is as follows. F(1)F(0) ATP synthase produces ATP from ADP in the presence of a proton or sodium gradient. F-type ATPases consist of two structural domains, F(1) containing the extramembraneous catalytic core and F(0) containing the membrane proton channel, linked together by a central stalk and a peripheral stalk. During catalysis, ATP synthesis in the catalytic domain of F(1) is coupled via a rotary mechanism of the central stalk subunits to proton translocation. Component of the F(0) channel, it forms part of the peripheral stalk, linking F(1) to F(0). The polypeptide is ATP synthase subunit b (Frankia casuarinae (strain DSM 45818 / CECT 9043 / HFP020203 / CcI3)).